The following is a 119-amino-acid chain: Putative phosphoethanolamine transferase YjgX (119 aa).

The next 2 membrane-spanning stretches (helical) occupy residues Val-5–Trp-25 and Leu-94–Tyr-114.

This sequence belongs to the phosphoethanolamine transferase family.

Its subcellular location is the cell inner membrane. The protein is Putative phosphoethanolamine transferase YjgX (yjgX) of Escherichia coli (strain K12).